Here is a 505-residue protein sequence, read N- to C-terminus: DDB1- and CUL4-associated factor 17 (505 aa).

Transmembrane regions (helical) follow at residues 186–206 (VLLYLAVFRVLPFSLVGILEI) and 222–242 (GILIVMYSSGLVRLYSFQAII).

In terms of assembly, interacts with DDB1, CUL4A and CUL4B.

Its subcellular location is the membrane. It is found in the nucleus. It localises to the nucleolus. It participates in protein modification; protein ubiquitination. Its function is as follows. May function as a substrate receptor for CUL4-DDB1 E3 ubiquitin-protein ligase complex. This Rattus norvegicus (Rat) protein is DDB1- and CUL4-associated factor 17 (Dcaf17).